The sequence spans 122 residues: Double-headed protease inhibitor, submandibular gland (122 aa).

2 Kazal-like domains span residues 10–70 (GGRK…NCDI) and 71–121 (ECTQ…QCES). Cystine bridges form between Cys-16-Cys-50, Cys-28-Cys-47, Cys-36-Cys-68, Cys-72-Cys-101, Cys-79-Cys-98, and Cys-87-Cys-119.

The protein resides in the secreted. Its function is as follows. This inhibitor is composed of two homologous actively inhibiting halves: one which inhibits trypsin, the other which inhibits elastase. The chain is Double-headed protease inhibitor, submandibular gland from Meles meles (Eurasian badger).